The following is a 690-amino-acid chain: Protein-glutamine gamma-glutamyltransferase 2 (690 aa).

A2 is subject to N-acetylalanine. Disulfide bonds link C230-C370 and C370-C371. Active-site residues include C277, H335, and D358. N398, D400, E436, E446, and E451 together coordinate Ca(2+). K467 is modified (N6-acetyllysine). 479-486 contacts GTP; it reads RIRVGQNM. E542 contributes to the Ca(2+) binding site. Residue 583–586 coordinates GTP; the sequence is RDIY. Residue Q636 forms an Isoglutamyl lysine isopeptide (Gln-Lys) (interchain with K-?) linkage.

This sequence belongs to the transglutaminase superfamily. Transglutaminase family. Monomer. Interacts with phospholipase C; promoting alpha-1 adrenergic receptor signaling. Interacts with PLCD1. It depends on Ca(2+) as a cofactor. Disulfide bond formation inactivates the calcium-dependent acyltransferase activity. Cys-370 can form disulfide bonds with both Cys-230 and Cys-371: formation of a disulfide bond between Cys-230 and Cys-370 facilitates formation of the disulfide between Cys-370 and Cys-371, which promotes inactivation of the acyltransferase activity. May also form interchain disulfids between Cys-230 and Cys-370. Ca(2+) protects against disulfide bond formation and inactivation. Post-translationally, auto-transglutaminated: Forms covalent cross-links mediated by transglutaminase between Gln-636 and the epsilon-amino group of a lysine residue of itself or HMGB1, forming homopolymers and heteropolymers, respectively. In terms of processing, S-nitrosylated, leading to inactivation of the acyltransferase activity.

Its subcellular location is the cytoplasm. The protein localises to the cytosol. The protein resides in the nucleus. It is found in the chromosome. It localises to the secreted. Its subcellular location is the extracellular space. The protein localises to the extracellular matrix. The protein resides in the cell membrane. It is found in the mitochondrion. It carries out the reaction L-glutaminyl-[protein] + L-lysyl-[protein] = [protein]-L-lysyl-N(6)-5-L-glutamyl-[protein] + NH4(+). It catalyses the reaction L-glutaminyl-[protein] + serotonin = 5-serotonyl-L-glutamyl-[protein] + NH4(+). The enzyme catalyses L-glutaminyl-[protein] + dopamine = 5-dopaminyl-L-glutamyl-[protein] + NH4(+). The catalysed reaction is L-glutaminyl-[protein] + histamine = 5-histaminyl-L-glutamyl-[protein] + NH4(+). It carries out the reaction L-glutaminyl-[protein] + (R)-noradrenaline = 5-(R)-noradrenalinyl-L-glutamyl-[protein] + NH4(+). It catalyses the reaction L-glutaminyl-[protein] + H2O = L-glutamyl-[protein] + NH4(+). Acyltransferase activity is regulated by the binding of GTP and Ca(2+): inactivated by GTP, which stabilizes its closed structure, thereby obstructing the accessibility of substrates to the active sites. In contrast, Ca(2+) acts as a cofactor by inducing conformational change to the active open form. In absence of Ca(2+), Mg(2+) may bind Ca(2+)-binding sites, promoting GTP-binding and subsequent inhibition of the acyltransferase activity. Extracellularly reduced and activated by CLIC3. Functionally, calcium-dependent acyltransferase that catalyzes the formation of covalent bonds between peptide-bound glutamine and various primary amines, such as gamma-amino group of peptide-bound lysine, or mono- and polyamines, thereby producing cross-linked or aminated proteins, respectively. Involved in many biological processes, such as bone development, angiogenesis, wound healing, cellular differentiation, chromatin modification and apoptosis. Acts as a protein-glutamine gamma-glutamyltransferase by mediating the cross-linking of proteins, such as ACO2, HSPB6, FN1, HMGB1, RAP1GDS1, SLC25A4/ANT1, SPP1 and WDR54. Under physiological conditions, the protein cross-linking activity is inhibited by GTP; inhibition is relieved by Ca(2+) in response to various stresses. When secreted, catalyzes cross-linking of proteins of the extracellular matrix, such as FN1 and SPP1 resulting in the formation of scaffolds. Plays a key role during apoptosis, both by (1) promoting the cross-linking of cytoskeletal proteins resulting in condensation of the cytoplasm, and by (2) mediating cross-linking proteins of the extracellular matrix, resulting in the irreversible formation of scaffolds that stabilize the integrity of the dying cells before their clearance by phagocytosis, thereby preventing the leakage of harmful intracellular components. In addition to protein cross-linking, can use different monoamine substrates to catalyze a vast array of protein post-translational modifications: mediates aminylation of serotonin, dopamine, noradrenaline or histamine into glutamine residues of target proteins to generate protein serotonylation, dopaminylation, noradrenalinylation or histaminylation, respectively. Mediates protein serotonylation of small GTPases during activation and aggregation of platelets, leading to constitutive activation of these GTPases. Plays a key role in chromatin organization by mediating serotonylation and dopaminylation of histone H3. Catalyzes serotonylation of 'Gln-5' of histone H3 (H3Q5ser) during serotonergic neuron differentiation, thereby facilitating transcription. Acts as a mediator of neurotransmission-independent role of nuclear dopamine in ventral tegmental area (VTA) neurons: catalyzes dopaminylation of 'Gln-5' of histone H3 (H3Q5dop), thereby regulating relapse-related transcriptional plasticity in the reward system. Regulates vein remodeling by mediating serotonylation and subsequent inactivation of ATP2A2/SERCA2. Also acts as a protein deamidase by mediating the side chain deamidation of specific glutamine residues of proteins to glutamate. Catalyzes specific deamidation of protein gliadin, a component of wheat gluten in the diet. May also act as an isopeptidase cleaving the previously formed cross-links. Also able to participate in signaling pathways independently of its acyltransferase activity: acts as a signal transducer in alpha-1 adrenergic receptor-mediated stimulation of phospholipase C-delta (PLCD) activity and is required for coupling alpha-1 adrenergic agonists to the stimulation of phosphoinositide lipid metabolism. The sequence is that of Protein-glutamine gamma-glutamyltransferase 2 from Cavia cutleri (Guinea pig).